We begin with the raw amino-acid sequence, 225 residues long: Ribonuclease T (225 aa).

Residues 1 to 21 are disordered; the sequence is MSEDHFDDEHEGHGGGGGSRH. The Exonuclease domain occupies 33–207; the sequence is VVVDVETGGF…YDTEKTAELF (175 aa). 4 residues coordinate Mg(2+): D36, E38, H194, and D199. H194 serves as the catalytic Proton donor/acceptor.

Belongs to the RNase T family. Homodimer. It depends on Mg(2+) as a cofactor.

Its function is as follows. Trims short 3' overhangs of a variety of RNA species, leaving a one or two nucleotide 3' overhang. Responsible for the end-turnover of tRNA: specifically removes the terminal AMP residue from uncharged tRNA (tRNA-C-C-A). Also appears to be involved in tRNA biosynthesis. This is Ribonuclease T from Pseudomonas syringae pv. syringae (strain B728a).